Here is a 370-residue protein sequence, read N- to C-terminus: Type II restriction enzyme MjaII (370 aa).

The protein belongs to the TdeIII type II restriction endonuclease family.

The enzyme catalyses Endonucleolytic cleavage of DNA to give specific double-stranded fragments with terminal 5'-phosphates.. In terms of biological role, a P subtype restriction enzyme that recognizes the double-stranded sequence 5'-GGNCC-3'; the cleavage site is unknown. The polypeptide is Type II restriction enzyme MjaII (mjaIIR) (Methanocaldococcus jannaschii (strain ATCC 43067 / DSM 2661 / JAL-1 / JCM 10045 / NBRC 100440) (Methanococcus jannaschii)).